The following is a 393-amino-acid chain: Squamosa promoter-binding-like protein 11 (393 aa).

Residues 74–96 (QSTSINSSSPEAKRCKLASESSP) form a disordered region. The segment at 172 to 249 (VPRCQIDGCE…SHHNARRRKP (78 aa)) adopts an SBP-type zinc-finger fold. Zn(2+)-binding residues include cysteine 175, cysteine 180, cysteine 197, histidine 200, cysteine 216, cysteine 219, histidine 223, and cysteine 235. A Bipartite nuclear localization signal motif is present at residues 232–248 (KRSCRKRLSHHNARRRK).

The cofactor is Zn(2+).

It is found in the nucleus. Its function is as follows. Trans-acting factor that binds specifically to the consensus nucleotide sequence 5'-TNCGTACAA-3'. The protein is Squamosa promoter-binding-like protein 11 (SPL11) of Arabidopsis thaliana (Mouse-ear cress).